We begin with the raw amino-acid sequence, 606 residues long: DNA-directed RNA polymerase III subunit RPC3 (606 aa).

Residues 533 to 554 are leucine-zipper; the sequence is LTFCMADILSNIQQFKNDNKIL.

It belongs to the RNA polymerase beta chain family. As to quaternary structure, component of the RNA polymerase III (Pol III) complex consisting of 17 subunits.

The protein resides in the nucleus. Its function is as follows. DNA-dependent RNA polymerase catalyzes the transcription of DNA into RNA using the four ribonucleoside triphosphates as substrates. Specific core component of RNA polymerase III which synthesizes small RNAs, such as 5S rRNA and tRNAs. This is DNA-directed RNA polymerase III subunit RPC3 (RPC82) from Debaryomyces hansenii (strain ATCC 36239 / CBS 767 / BCRC 21394 / JCM 1990 / NBRC 0083 / IGC 2968) (Yeast).